Consider the following 127-residue polypeptide: MQSVDPQVVGVGKQFVEHYYGIFDSNRAGLTQIYQQQTTLTWEGKFLSGADAIVKHIVELPFQQTNRKINSIDCQQTYQPGIMITVTGTLIIDGEAKNQLKFVQVFNLASNNGSFLLINDFFRLVLD.

In terms of domain architecture, NTF2 spans 11-124 (VGKQFVEHYY…FLLINDFFRL (114 aa)).

It is found in the cytoplasm. Its subcellular location is the cytosol. It localises to the nucleus outer membrane. The protein resides in the nucleus. The protein localises to the nuclear pore complex. It is found in the nucleus inner membrane. Its subcellular location is the nucleoplasm. In terms of biological role, mediates the import of GDP-bound RAN from the cytoplasm into the nucleus which is essential for the function of RAN in cargo receptor-mediated nucleocytoplasmic transport. Thereby, plays indirectly a more general role in cargo receptor-mediated nucleocytoplasmic transport. Interacts with GDP-bound RAN in the cytosol, recruits it to the nuclear pore complex via its interaction with nucleoporins and promotes its nuclear import. The protein is Nuclear transport factor 2 of Dictyostelium discoideum (Social amoeba).